The following is a 52-amino-acid chain: uncharacterized protein (52 aa).

Positions 1-52 are disordered; that stretch reads MVNNDAKIGRREFYDRVESVRPKSPPRERPTYTYSNSRTVDGYSNRGPRADF. The segment covering 7–30 has biased composition (basic and acidic residues); that stretch reads KIGRREFYDRVESVRPKSPPRERP.

This is an uncharacterized protein from Dictyostelium discoideum (Social amoeba).